A 179-amino-acid chain; its full sequence is Riboflavin kinase (179 aa).

CDP is bound at residue 61–66; the sequence is GDGEGR. Positions 90 and 92 each coordinate Mg(2+). FMN is bound by residues threonine 147 and glutamate 155. Position 160–163 (160–163) interacts with CDP; it reads VELR.

It belongs to the archaeal riboflavin kinase family. Requires Mg(2+) as cofactor.

It catalyses the reaction riboflavin + CTP = CDP + FMN + H(+). The protein operates within cofactor biosynthesis; FMN biosynthesis; FMN from riboflavin (CTP route): step 1/1. In terms of biological role, catalyzes the CTP-dependent phosphorylation of riboflavin (vitamin B2) to form flavin mononucleotide (FMN). This Ignicoccus hospitalis (strain KIN4/I / DSM 18386 / JCM 14125) protein is Riboflavin kinase.